We begin with the raw amino-acid sequence, 252 residues long: Glucosamine-6-phosphate deaminase (252 aa).

Catalysis depends on D67, which acts as the Proton acceptor; for enolization step. N137 acts as the For ring-opening step in catalysis. H139 functions as the Proton acceptor; for ring-opening step in the catalytic mechanism. E144 acts as the For ring-opening step in catalysis.

The protein belongs to the glucosamine/galactosamine-6-phosphate isomerase family. NagB subfamily.

The catalysed reaction is alpha-D-glucosamine 6-phosphate + H2O = beta-D-fructose 6-phosphate + NH4(+). The protein operates within amino-sugar metabolism; N-acetylneuraminate degradation; D-fructose 6-phosphate from N-acetylneuraminate: step 5/5. In terms of biological role, catalyzes the reversible isomerization-deamination of glucosamine 6-phosphate (GlcN6P) to form fructose 6-phosphate (Fru6P) and ammonium ion. This Staphylococcus aureus (strain bovine RF122 / ET3-1) protein is Glucosamine-6-phosphate deaminase.